The primary structure comprises 800 residues: Putative antiporter subunit mnhA2 (800 aa).

A run of 21 helical transmembrane segments spans residues 3–23 (LVYL…TLFI), 29–49 (FAGY…LAQI), 78–98 (GLGL…FFYA), 109–129 (LPRF…IVVS), 133–153 (ILMY…ISYW), 167–187 (FIIT…LYII), 202–222 (SISE…GAFT), 249–269 (SATM…ILGL), 273–293 (YIYI…VTAL), 300–320 (GILA…VGLG), 337–357 (LILF…CALF), 387–407 (LVMT…GFLS), 428–448 (LTII…VYAV), 472–492 (PWLF…IFFI), 527–547 (GVNL…ILAL), 596–616 (IITV…VGLP), 627–647 (GPLE…LVFI), 651–671 (LTMV…FLLM), 676–696 (LALT…VSFS), 712–732 (TIKI…IFIA), and 768–788 (LDTM…YTLL).

The protein belongs to the CPA3 antiporters (TC 2.A.63) subunit A family. In terms of assembly, may form a heterooligomeric complex that consists of seven subunits: mnhA2, mnhB2, mnhC2, mnhD2, mnhE2, mnhF2 and mnhG2.

It is found in the cell membrane. The sequence is that of Putative antiporter subunit mnhA2 (mnhA2) from Staphylococcus haemolyticus (strain JCSC1435).